A 125-amino-acid polypeptide reads, in one-letter code: uncharacterized protein (125 aa).

4 helical membrane-spanning segments follow: residues 9-29, 33-53, 56-76, and 100-120; these read IANAGALAVAVWLLDKITLTG, GEKTLTLIVVALVFGLVNMVV, IVQVLTFPLFILTLGLFTLVV, and FWTAVLGGLIVSIVSWALNAF.

It localises to the cell membrane. This is an uncharacterized protein from Streptomyces coelicolor (strain ATCC BAA-471 / A3(2) / M145).